A 448-amino-acid polypeptide reads, in one-letter code: GTPase Der (448 aa).

2 EngA-type G domains span residues phenylalanine 2–glutamine 171 and proline 181–serine 364. GTP is bound by residues glycine 8–serine 15, aspartate 58–phenylalanine 62, asparagine 123–aspartate 126, glycine 187–serine 194, aspartate 234–isoleucine 238, and asparagine 305–aspartate 308. The region spanning lysine 365–lysine 448 is the KH-like domain.

Belongs to the TRAFAC class TrmE-Era-EngA-EngB-Septin-like GTPase superfamily. EngA (Der) GTPase family. In terms of assembly, associates with the 50S ribosomal subunit.

Functionally, GTPase that plays an essential role in the late steps of ribosome biogenesis. The sequence is that of GTPase Der from Thermodesulfovibrio yellowstonii (strain ATCC 51303 / DSM 11347 / YP87).